Here is a 631-residue protein sequence, read N- to C-terminus: tRNA uridine 5-carboxymethylaminomethyl modification enzyme MnmG (631 aa).

Residue 14-19 participates in FAD binding; the sequence is GGGHAG. NAD(+) is bound at residue 274–288; it reads GPRYCPSIEDKIHRF.

It belongs to the MnmG family. As to quaternary structure, homodimer. Heterotetramer of two MnmE and two MnmG subunits. FAD is required as a cofactor.

The protein localises to the cytoplasm. NAD-binding protein involved in the addition of a carboxymethylaminomethyl (cmnm) group at the wobble position (U34) of certain tRNAs, forming tRNA-cmnm(5)s(2)U34. The sequence is that of tRNA uridine 5-carboxymethylaminomethyl modification enzyme MnmG from Pseudomonas paraeruginosa (strain DSM 24068 / PA7) (Pseudomonas aeruginosa (strain PA7)).